The following is a 195-amino-acid chain: Cytochrome b-245 light chain (195 aa).

Residues 2 to 7 are Cytoplasmic-facing; it reads GQIEWA. A helical membrane pass occupies residues 8–30; that stretch reads MWANEQALASGLILITGGIVATA. Topologically, residues 31–35 are extracellular; sequence GRFTQ. The helical transmembrane segment at 36 to 53 threads the bilayer; sequence WYFGAYSIVAGVFVCLLE. The Cytoplasmic portion of the chain corresponds to 54–69; the sequence is YPRGKRKKGSTMERWG. Residues 70-80 lie within the membrane without spanning it; that stretch reads QKYMTAVVKLF. Residues 81–86 lie on the Cytoplasmic side of the membrane; the sequence is GPFTRN. A helical transmembrane segment spans residues 87–104; it reads YYVRAVLHLLLSVPAGFL. Position 105 (leucine 105) is a topological domain, extracellular. The helical transmembrane segment at 106 to 126 threads the bilayer; sequence ATILGTACLAIASGIYLLAAV. At 127–195 the chain is on the cytoplasmic side; sequence RGEQWTPIEP…NPIPVTDEVV (69 aa). Residues 134–195 are disordered; that stretch reads IEPKPRERPQ…NPIPVTDEVV (62 aa). Threonine 147 bears the Phosphothreonine mark. Lysine 149 is covalently cross-linked (Glycyl lysine isopeptide (Lys-Gly) (interchain with G-Cter in ubiquitin)). At serine 168 the chain carries Phosphoserine.

Belongs to the p22phox family. In terms of assembly, component of the phagocyte NADPH oxidase core complex/cytochrome b558 complex, composed of CYBB (heavy chain (beta)) and CYBA (light chain (alpha)). Component of the phagocyte NADPH oxidase complex composed of an obligatory core heterodimer formed by the membrane proteins CYBA and CYBB and the cytosolic regulatory subunits NCF1/p47-phox, NCF2/p67-phox, NCF4/p40-phox and the small GTPase RAC1 or RAC2. Interacts with NCF1 (via SH3 domain). Interacts with SH3PXD2A. Interacts with DUOX1, DUOX2 and TPO. Interacts with NOX4; this interaction mediates superoxide generation. Interacts with calprotectin (S100A8/9). Interacts with GBP7. Interacts with NOXO1. Forms a heterodimer with NOX3 and is essential for activity and cell membrane localization of NOX3. Interacts with NOX1. Phosphorylation at Thr-147 enhances NADPH oxidase activity by promoting NCF1/p47-phox binding. In terms of processing, ubiquitinated at Lys-149 likely by RNF145.

Its subcellular location is the cell membrane. In terms of biological role, subunit of NADPH oxidase complexes that is required for the NADPH oxidase activity that generates, in various cell types, superoxide from molecular oxygen utilizing NADPH as an electron donor. Subunit of the phagocyte NADPH oxidase complex that mediates the transfer of electrons from cytosolic NADPH to O2 to produce the superoxide anion (O2(-)). In the activated complex, electrons are first transferred from NADPH to flavin adenine dinucleotide (FAD) and subsequently transferred via two heme molecules to molecular oxygen, producing superoxide through an outer-sphere reaction. Activation of the NADPH oxidase complex is initiated by the assembly of cytosolic subunits of the NADPH oxidase complex with the core NADPH oxidase complex to form a complex at the plasma membrane or phagosomal membrane. This activation process is initiated by phosphorylation dependent binding of the cytosolic NCF1/p47-phox subunit to the C-terminus of CYBA/p22-phox. Aassociates with NOX3 to form a functional NADPH oxidase constitutively generating superoxide. This is Cytochrome b-245 light chain from Homo sapiens (Human).